The primary structure comprises 286 residues: Energy-coupling factor transporter ATP-binding protein EcfA2 (286 aa).

One can recognise an ABC transporter domain in the interval 3-246 (IRFDNVSYTY…KEKLADWHIG (244 aa)). Residue 40–47 (GQTGSGKS) coordinates ATP.

This sequence belongs to the ABC transporter superfamily. Energy-coupling factor EcfA family. As to quaternary structure, forms a stable energy-coupling factor (ECF) transporter complex composed of 2 membrane-embedded substrate-binding proteins (S component), 2 ATP-binding proteins (A component) and 2 transmembrane proteins (T component).

Its subcellular location is the cell membrane. In terms of biological role, ATP-binding (A) component of a common energy-coupling factor (ECF) ABC-transporter complex. Unlike classic ABC transporters this ECF transporter provides the energy necessary to transport a number of different substrates. The polypeptide is Energy-coupling factor transporter ATP-binding protein EcfA2 (Staphylococcus aureus (strain MRSA252)).